Here is a 195-residue protein sequence, read N- to C-terminus: dITP/XTP pyrophosphatase (195 aa).

8–13 (SGNAGK) is a binding site for substrate. Positions 38 and 67 each coordinate Mg(2+). Aspartate 67 (proton acceptor) is an active-site residue. Residues serine 68, 146–149 (FGYD), lysine 169, and 174–175 (HR) each bind substrate.

Belongs to the HAM1 NTPase family. Homodimer. The cofactor is Mg(2+).

It carries out the reaction XTP + H2O = XMP + diphosphate + H(+). It catalyses the reaction dITP + H2O = dIMP + diphosphate + H(+). The enzyme catalyses ITP + H2O = IMP + diphosphate + H(+). Functionally, pyrophosphatase that catalyzes the hydrolysis of nucleoside triphosphates to their monophosphate derivatives, with a high preference for the non-canonical purine nucleotides XTP (xanthosine triphosphate), dITP (deoxyinosine triphosphate) and ITP. Seems to function as a house-cleaning enzyme that removes non-canonical purine nucleotides from the nucleotide pool, thus preventing their incorporation into DNA/RNA and avoiding chromosomal lesions. The chain is dITP/XTP pyrophosphatase from Parasynechococcus marenigrum (strain WH8102).